The sequence spans 115 residues: Variant surface glycoprotein ANTAT 1.8 (115 aa).

Asn42 carries N-linked (GlcNAc...) asparagine glycosylation. Residue Asp92 is the site of GPI-anchor amidated aspartate attachment. The propeptide at 93 to 115 (SSILVNKQLALSVVSAAFAALLF) is removed in mature form.

The protein resides in the cell membrane. Functionally, VSG forms a coat on the surface of the parasite. The trypanosome evades the immune response of the host by expressing a series of antigenically distinct VSGs from an estimated 1000 VSG genes. The polypeptide is Variant surface glycoprotein ANTAT 1.8 (Trypanosoma brucei brucei).